The sequence spans 312 residues: Olfactory receptor 4K17 (312 aa).

At 1–25 the chain is on the extracellular side; sequence MKLLNQSQVSEFILLGLTSSQDVEF. Asparagine 5 carries an N-linked (GlcNAc...) asparagine glycan. Residues 26–49 traverse the membrane as a helical segment; that stretch reads LLFALFSVIYVVTVLGNLLIIVTV. Residues 50-57 are Cytoplasmic-facing; sequence FNTPNLNT. Residues 58–79 traverse the membrane as a helical segment; that stretch reads PMYFLLGNLSFVDMTLASFATP. Residues 80 to 100 are Extracellular-facing; it reads KVILNLLKKQKVISFAGCFTQ. A disulfide bridge links cysteine 97 with cysteine 189. A helical membrane pass occupies residues 101 to 120; the sequence is IFLLHLLGGVEMVLLVSMAF. Residues 121–139 are Cytoplasmic-facing; it reads DRYVAICKPLHYMTIMNKK. The helical transmembrane segment at 140–158 threads the bilayer; it reads VCVLLVVTSWLLGLLHSGF. Over 159-195 the chain is Extracellular; that stretch reads QIPFAVNLPFCGPNVVDSIFCDLPLVTKLACIDIYFV. Residues 196–219 traverse the membrane as a helical segment; it reads QVVIVANSGIISLSCFIILLISYS. The Cytoplasmic segment spans residues 220 to 235; it reads LILITIKNHSPTGQSK. Residues 236-258 form a helical membrane-spanning segment; it reads ARSTLTAHITVVILFFGPCIFIY. At 259-269 the chain is on the extracellular side; sequence IWPFGNHSVDK. Asparagine 264 is a glycosylation site (N-linked (GlcNAc...) asparagine). The helical transmembrane segment at 270–289 threads the bilayer; the sequence is FLAVFYTIITPILNPIIYTL. Topologically, residues 290–312 are cytoplasmic; the sequence is RNKEMKISMKKLWRAFVNSREDT.

Belongs to the G-protein coupled receptor 1 family.

The protein localises to the cell membrane. Functionally, odorant receptor. The protein is Olfactory receptor 4K17 (OR4K17) of Homo sapiens (Human).